A 303-amino-acid polypeptide reads, in one-letter code: MNIEVLKNEIYKLKEEKNALIVAHNYQIDEVQEIADFVGDSFYLSKVCAERPEKVIVFCGVHFMAESAKILSPHKKVLLPEIDAGCPLADMVTAEDVENLKKKYPDYSIVCYINSPASVKAKSDVICTSSNAVKIVREFPNDKIIFLPDKNLGSFVKKQVPEKDIILWEGFCITHYKIKKEDVEKAKSLHPNALVLVHPECRPEVVELADFVGSTKQIIDFANTSKEKEFIIGTEMGVLYSLKKLNPDKKFYILHPGMICPNMKKNTLQSVRDALLYERYQIEVEEEIMEGAKKALSKMLEMG.

The iminosuccinate site is built by His24 and Ser41. A [4Fe-4S] cluster-binding site is contributed by Cys86. Iminosuccinate is bound by residues Tyr112–Asn114 and Ser129. Cys172 serves as a coordination point for [4Fe-4S] cluster. Iminosuccinate-binding positions include His198–Glu200 and Thr215. Residue Cys260 coordinates [4Fe-4S] cluster.

This sequence belongs to the quinolinate synthase family. Type 2 subfamily. It depends on [4Fe-4S] cluster as a cofactor.

Its subcellular location is the cytoplasm. The catalysed reaction is iminosuccinate + dihydroxyacetone phosphate = quinolinate + phosphate + 2 H2O + H(+). It participates in cofactor biosynthesis; NAD(+) biosynthesis; quinolinate from iminoaspartate: step 1/1. Its function is as follows. Catalyzes the condensation of iminoaspartate with dihydroxyacetone phosphate to form quinolinate. The sequence is that of Quinolinate synthase from Caldicellulosiruptor bescii (strain ATCC BAA-1888 / DSM 6725 / KCTC 15123 / Z-1320) (Anaerocellum thermophilum).